Reading from the N-terminus, the 238-residue chain is Sugar fermentation stimulation protein homolog (238 aa).

This sequence belongs to the SfsA family.

This chain is Sugar fermentation stimulation protein homolog, found in Actinobacillus succinogenes (strain ATCC 55618 / DSM 22257 / CCUG 43843 / 130Z).